Here is a 437-residue protein sequence, read N- to C-terminus: Methylenetetrahydrofolate--tRNA-(uracil-5-)-methyltransferase TrmFO (437 aa).

An FAD-binding site is contributed by Gly-9–Gly-14.

It belongs to the MnmG family. TrmFO subfamily. It depends on FAD as a cofactor.

It is found in the cytoplasm. The enzyme catalyses uridine(54) in tRNA + (6R)-5,10-methylene-5,6,7,8-tetrahydrofolate + NADH + H(+) = 5-methyluridine(54) in tRNA + (6S)-5,6,7,8-tetrahydrofolate + NAD(+). It catalyses the reaction uridine(54) in tRNA + (6R)-5,10-methylene-5,6,7,8-tetrahydrofolate + NADPH + H(+) = 5-methyluridine(54) in tRNA + (6S)-5,6,7,8-tetrahydrofolate + NADP(+). Functionally, catalyzes the folate-dependent formation of 5-methyl-uridine at position 54 (M-5-U54) in all tRNAs. The polypeptide is Methylenetetrahydrofolate--tRNA-(uracil-5-)-methyltransferase TrmFO (Moorella thermoacetica (strain ATCC 39073 / JCM 9320)).